The following is a 371-amino-acid chain: D-alanine--D-alanine ligase (371 aa).

Residues 154 to 361 (KKLLVAEGLP…YPTLLAAMVD (208 aa)) form the ATP-grasp domain. Position 182-237 (182-237 (RERLGLPVFVKPARGGSSIGVSRVSDWAELPAAIEAARRHDPKVIVEAGIAGRELE)) interacts with ATP. Residues aspartate 316, glutamate 328, and asparagine 330 each contribute to the Mg(2+) site.

This sequence belongs to the D-alanine--D-alanine ligase family. Requires Mg(2+) as cofactor. Mn(2+) serves as cofactor.

It is found in the cytoplasm. It catalyses the reaction 2 D-alanine + ATP = D-alanyl-D-alanine + ADP + phosphate + H(+). It participates in cell wall biogenesis; peptidoglycan biosynthesis. Cell wall formation. The chain is D-alanine--D-alanine ligase from Mycobacterium sp. (strain KMS).